Consider the following 191-residue polypeptide: Glycerol-3-phosphate acyltransferase (191 aa).

5 helical membrane-spanning segments follow: residues 5–25, 51–71, 78–98, 114–134, and 153–173; these read IILI…IAKI, LAVL…YTAQ, DLYI…PIWL, IALN…VFFI, and SFFF…LIFL.

Belongs to the PlsY family. Probably interacts with PlsX.

Its subcellular location is the cell membrane. It carries out the reaction an acyl phosphate + sn-glycerol 3-phosphate = a 1-acyl-sn-glycero-3-phosphate + phosphate. It participates in lipid metabolism; phospholipid metabolism. In terms of biological role, catalyzes the transfer of an acyl group from acyl-phosphate (acyl-PO(4)) to glycerol-3-phosphate (G3P) to form lysophosphatidic acid (LPA). This enzyme utilizes acyl-phosphate as fatty acyl donor, but not acyl-CoA or acyl-ACP. The chain is Glycerol-3-phosphate acyltransferase from Wolbachia pipientis subsp. Culex pipiens (strain wPip).